The sequence spans 294 residues: ATP phosphoribosyltransferase (294 aa).

This sequence belongs to the ATP phosphoribosyltransferase family. Long subfamily. The cofactor is Mg(2+).

The protein localises to the cytoplasm. The catalysed reaction is 1-(5-phospho-beta-D-ribosyl)-ATP + diphosphate = 5-phospho-alpha-D-ribose 1-diphosphate + ATP. The protein operates within amino-acid biosynthesis; L-histidine biosynthesis; L-histidine from 5-phospho-alpha-D-ribose 1-diphosphate: step 1/9. With respect to regulation, feedback inhibited by histidine. Its function is as follows. Catalyzes the condensation of ATP and 5-phosphoribose 1-diphosphate to form N'-(5'-phosphoribosyl)-ATP (PR-ATP). Has a crucial role in the pathway because the rate of histidine biosynthesis seems to be controlled primarily by regulation of HisG enzymatic activity. The sequence is that of ATP phosphoribosyltransferase from Prosthecochloris aestuarii (strain DSM 271 / SK 413).